A 199-amino-acid polypeptide reads, in one-letter code: Small heat shock protein hspG4 (199 aa).

A sHSP domain is found at 30–199 (NKRVDIIPSM…SSNTIKININ (170 aa)). Residues 83–105 (KNQQQQQQQQQLENSNNKENDEP) are disordered.

Belongs to the small heat shock protein (HSP20) family.

The sequence is that of Small heat shock protein hspG4 (hspG4) from Dictyostelium discoideum (Social amoeba).